The sequence spans 467 residues: ATP synthase subunit beta (467 aa).

An ATP-binding site is contributed by Gly-152–Thr-159.

It belongs to the ATPase alpha/beta chains family. F-type ATPases have 2 components, CF(1) - the catalytic core - and CF(0) - the membrane proton channel. CF(1) has five subunits: alpha(3), beta(3), gamma(1), delta(1), epsilon(1). CF(0) has three main subunits: a(1), b(2) and c(9-12). The alpha and beta chains form an alternating ring which encloses part of the gamma chain. CF(1) is attached to CF(0) by a central stalk formed by the gamma and epsilon chains, while a peripheral stalk is formed by the delta and b chains.

It is found in the cell membrane. The enzyme catalyses ATP + H2O + 4 H(+)(in) = ADP + phosphate + 5 H(+)(out). Produces ATP from ADP in the presence of a proton gradient across the membrane. The catalytic sites are hosted primarily by the beta subunits. This chain is ATP synthase subunit beta, found in Caldicellulosiruptor bescii (strain ATCC BAA-1888 / DSM 6725 / KCTC 15123 / Z-1320) (Anaerocellum thermophilum).